Here is a 529-residue protein sequence, read N- to C-terminus: AAA ATPase forming ring-shaped complexes (529 aa).

Residues 15–62 adopt a coiled-coil conformation; the sequence is MERQDERLRSLSEANDRLMAKNHALAKALTRATQELTKAKAQLNQLAG. 253-258 contacts ATP; it reads GNGKTL.

It belongs to the AAA ATPase family. Homohexamer. Assembles into a hexameric ring structure.

This chain is AAA ATPase forming ring-shaped complexes, found in Bifidobacterium dentium (strain ATCC 27534 / DSM 20436 / JCM 1195 / Bd1).